A 340-amino-acid chain; its full sequence is Glutaminyl-peptide cyclotransferase (340 aa).

Residues 1–23 (MAIGSVVFAAAGLLLLLLPPSHQ) form the signal peptide. N-linked (GlcNAc...) asparagine glycosylation occurs at N42. Alpha-D-mannopyranose-binding residues include R85 and E91. A disulfide bridge connects residues C113 and C136. A Zn(2+)-binding site is contributed by D131. Q151 and R155 together coordinate alpha-D-mannopyranose. N-linked (GlcNAc...) asparagine glycosylation is present at N156. E170 functions as the Proton acceptor in the catalytic mechanism. Residue E171 coordinates Zn(2+). D218 (proton acceptor) is an active-site residue. H297 serves as a coordination point for Zn(2+). L306 is a binding site for alpha-D-mannopyranose.

The protein belongs to the glutaminyl-peptide cyclotransferase family.

The protein localises to the secreted. The enzyme catalyses N-terminal L-glutaminyl-[peptide] = N-terminal 5-oxo-L-prolyl-[peptide] + NH4(+). Its activity is regulated as follows. Inhibited by imidazoles (imidazole, benzimidazole, 1-benzylimidazole, 1-methylimidazole, P150/03, N-omega-acetylhistamine and 4-methylimidazole) and cysteamines (cysteamine, N-dimethylcysteamine and N-diethylcysteamine). Partially inhibited by PDB50 1(3,4-dimethoxyphenyl)-3-(3-imidazol-1-ylpropyl)thiourea. In terms of biological role, acts as a glutaminyl-peptide cyclotransferase. Responsible for the biosynthesis of pyroglutamyl peptides. Might be more efficient in the conversion of tri and tetrapeptides in vitro. Might have a relative preference for substrates containing hydrophobic amino acids in vitro. This is Glutaminyl-peptide cyclotransferase from Drosophila melanogaster (Fruit fly).